A 551-amino-acid chain; its full sequence is Scaffold protein OPG125 (551 aa).

Belongs to the orthopoxvirus protein OPG125 family. In terms of assembly, homotrimer. Self-assembles to form a layer. Interacts with OPG158 (via N-terminus); this interaction is necessary for OPG125 association with membranes.

It localises to the membrane. Scaffold protein which forms a transitory spherical honeycomb lattice providing curvature and rigidity to the convex membrane of crescent and immature virions (IV). This association occurs concomitantly with viral membrane formation. Targeted by the drug rifampicin, which prevents the formation of this lattice, and hence virus morphogenesis. In the presence of rifampicin, irregularly shaped membranes that lack the honeycomb layer accumulate around areas of electron-dense viroplasm. This layer is lost from virions during maturation from IV to mature virion (MV), through the proteolysis of OPG158 N-terminus. The protein is Scaffold protein OPG125 (OPG125) of Homo sapiens (Human).